The sequence spans 30 residues: PKIRKVLVANRGEIAIRVMRTXKELGIATV.

The 30-residue stretch at 1–30 (PKIRKVLVANRGEIAIRVMRTXKELGIATV) folds into the Biotin carboxylation domain.

In terms of assembly, dodecamer composed of six biotin-containing alpha subunits and six beta subunits. Mg(2+) is required as a cofactor. Requires Mn(2+) as cofactor. The cofactor is biotin.

It carries out the reaction propanoyl-CoA + hydrogencarbonate + ATP = (S)-methylmalonyl-CoA + ADP + phosphate + H(+). The protein operates within metabolic intermediate metabolism; propanoyl-CoA degradation; succinyl-CoA from propanoyl-CoA: step 1/3. Functionally, this is one of the 2 subunits of the biotin-dependent propionyl-CoA carboxylase (PCC), the enzyme catalyzing the carboxylation of propionyl-CoA/propanoyl-CoA to D-methylmalonyl-CoA/(S)-methylmalonyl-CoA. Within the holoenzyme, the alpha subunit catalyzes the ATP-dependent carboxylation of the biotin carried by the biotin carboxyl carrier (BCC) domain, while the beta subunit then transfers the carboxyl group from carboxylated biotin to propionyl-CoA. Propionyl-CoA carboxylase also carboxylates acetyl-CoA, butyryl-CoA and succinyl-CoA. The sequence is that of Propionyl-CoA carboxylase alpha chain from Myxococcus xanthus.